Reading from the N-terminus, the 118-residue chain is Small ribosomal subunit protein mS41 (118 aa).

The transit peptide at 1–24 (MLRVVAKAQYPAAVRCFSTSHAAF) directs the protein to the mitochondrion.

Belongs to the mitochondrion-specific ribosomal protein mS41 family.

The protein localises to the mitochondrion. Its function is as follows. Involved in telomere length regulation. This is Small ribosomal subunit protein mS41 (FYV4) from Yarrowia lipolytica (strain CLIB 122 / E 150) (Yeast).